The following is a 669-amino-acid chain: Epithelial sodium channel subunit gamma (669 aa).

Residues 1 to 67 (MAPPYHGDTR…VVSRGRLRKF (67 aa)) are Cytoplasmic-facing. Residues 68 to 88 (IWILLTLSAVGLILWQCAELI) form a helical membrane-spanning segment. The Extracellular segment spans residues 89-551 (MSYYTASVSV…VILLSNFGGQ (463 aa)). 8 cysteine pairs are disulfide-bonded: C113-C300, C223-C231, C277-C284, C389-C474, C411-C470, C415-C466, C424-C451, and C426-C440. The chain crosses the membrane as a helical span at residues 552 to 572 (LGLWMSCSMVCVIEIIEVFFI). At 573–669 (DSFSIVMRRR…LPDTLEGRSH (97 aa)) the chain is on the cytoplasmic side. Positions 592 to 619 (DRKAPRPQEPPQVNAPAKEGHDNPVCTD) are disordered.

This sequence belongs to the amiloride-sensitive sodium channel (TC 1.A.6) family. SCNN1G subfamily. Component of the heterotrimeric epithelial sodium channel (ENaC) composed of an alpha/SCNN1A, a beta/SCNN1B and a gamma/SCNN1G subunit.

Its subcellular location is the apical cell membrane. It carries out the reaction Na(+)(in) = Na(+)(out). With respect to regulation, originally identified and characterized by its inhibition by the diuretic drug amiloride. Functionally, this is one of the three pore-forming subunits of the heterotrimeric epithelial sodium channel (ENaC), a critical regulator of sodium balance and fluid homeostasis. ENaC operates in epithelial tissues, where it mediates the electrodiffusion of sodium ions from extracellular fluid through the apical membrane of cells, with water following osmotically. The sequence is that of Epithelial sodium channel subunit gamma from Pelodiscus sinensis (Chinese softshell turtle).